Consider the following 401-residue polypeptide: Tyrosine--tRNA ligase (401 aa).

The short motif at 42-51 (PTAPDLHLGH) is the 'HIGH' region element. Positions 226–230 (KMSKS) match the 'KMSKS' region motif. Residue K229 participates in ATP binding. The region spanning 336-397 (IALAQLLKQI…GKRRIAKLSI (62 aa)) is the S4 RNA-binding domain.

The protein belongs to the class-I aminoacyl-tRNA synthetase family. TyrS type 2 subfamily. As to quaternary structure, homodimer.

It localises to the cytoplasm. It carries out the reaction tRNA(Tyr) + L-tyrosine + ATP = L-tyrosyl-tRNA(Tyr) + AMP + diphosphate + H(+). Catalyzes the attachment of tyrosine to tRNA(Tyr) in a two-step reaction: tyrosine is first activated by ATP to form Tyr-AMP and then transferred to the acceptor end of tRNA(Tyr). In Legionella pneumophila (strain Lens), this protein is Tyrosine--tRNA ligase.